A 208-amino-acid chain; its full sequence is Protein TIC 20-II, chloroplastic (208 aa).

The transit peptide at 1–49 directs the protein to the chloroplast; that stretch reads MASLCLSLHQTLTNPLSAPRCRPLSLSFPGSSTFSIRPSSRRATALTTR. Helical transmembrane passes span 61–83, 101–121, 134–154, and 172–192; these read VISI…FLFA, LYRS…LGVV, AMQA…TRIL, and TGVF…SLLG.

The protein belongs to the Tic20 family. As to quaternary structure, part of the Tic complex. In terms of tissue distribution, expressed in leaves, siliques and roots.

It localises to the plastid. The protein resides in the chloroplast inner membrane. May be involved in protein precursor import into chloroplasts. Not redundant with TIC20-I, TIC20-IV or TIC20-V. In Arabidopsis thaliana (Mouse-ear cress), this protein is Protein TIC 20-II, chloroplastic (TIC20-II).